Reading from the N-terminus, the 707-residue chain is GDNF-inducible zinc finger protein 1 (707 aa).

The 73-residue stretch at 31–103 (CDVTVIVDYQ…VYTARVRVKE (73 aa)) folds into the BTB domain. Residues 149–165 (VEASSGPQVSVTPSSKA) are compositionally biased toward polar residues. Disordered regions lie at residues 149-221 (VEAS…PKIR) and 243-309 (RRLR…KDGE). Composition is skewed to basic and acidic residues over residues 198 to 213 (PSKKCKEKLDKKKDVA), 243 to 278 (RRLREQQKSAEEAAKNDKCPQDQSPDNERVEAEPAS), and 287 to 298 (VEREESLQKVEG). 10 C2H2-type zinc fingers span residues 316–338 (FQCTVCDKAFLYEKSFLKHIKYH), 347–370 (YRCDTCGQTFANRCNLKSHQRHVH), 376–399 (FPCEMCAKKFKRKKDVKRHVLQVH), 406–428 (HRCGQCGKGLSSKTALRLHERTH), 434–456 (YGCTKCDAKFSQPSALKTHLRVH), 462–484 (FVCDECGARFTQNHMLIYHKRCH), 490–512 (FMCETCGKSFASKEYLKHHNRIH), 518–540 (FKCEVCLRTFAQRNSLYQHIKVH), 546–568 (YCCDQCGKQFTQVNALQRHHRIH), and 574–596 (YMCNACGRTFTDKSTLRRHTSIH). At Ser612 the chain carries Phosphoserine.

This sequence belongs to the krueppel C2H2-type zinc-finger protein family. Interacts with NCL.

The protein resides in the cytoplasm. It localises to the nucleus. It is found in the nucleoplasm. The protein localises to the nucleolus. Functionally, transcriptional repressor that binds the GZF1 responsive element (GRE) (consensus: 5'-TGCGCN[TG][CA]TATA-3'). May be regulating VSX2/HOX10 expression. This Rattus norvegicus (Rat) protein is GDNF-inducible zinc finger protein 1 (Gzf1).